Consider the following 461-residue polypeptide: MTKLWGGRFTKPADKTAEGFTSSLAFDRRLYKQDIRGSIAHVRMLGRQGIIPAADAARIEQGLREIEAEIEAGQFPFRQEYEDIHLNIEKRLIEKIGPAGGRLHTARSRNDQVVTDVHLWVKDEIAAVQRLVSDLQGTLLDRAREQMGAVMPGYTHLQRAQPVLLSHHLMAYFWMLERDYGRFADALRRADVSPLGAGALAGTTFPIDREFTAAELGFAGVYPNSMDAVSDRDFIVEFVAAAAICQMHLSRLAEELVMWSSTEFGFVEMDDAYATGSSIMPQKKNPDVAELVRGKTGRIYGDLMALLTVLKGLPLAYHTDLQEDKERLFDAVDTLKACLTVMTGMLATLKFNRERMAQAVRRDFSNATDMADYLVKKGMPFREAHEVVGKAVLYCVERGKFLADLTLEEFKAFSALFEADIYQAIAPETCVSQRTSLGGTAPAEVERQLALAAEILSRRMG.

The protein belongs to the lyase 1 family. Argininosuccinate lyase subfamily.

The protein resides in the cytoplasm. The catalysed reaction is 2-(N(omega)-L-arginino)succinate = fumarate + L-arginine. Its pathway is amino-acid biosynthesis; L-arginine biosynthesis; L-arginine from L-ornithine and carbamoyl phosphate: step 3/3. The chain is Argininosuccinate lyase from Symbiobacterium thermophilum (strain DSM 24528 / JCM 14929 / IAM 14863 / T).